The primary structure comprises 238 residues: Uridylate kinase (238 aa).

Residue 12–15 (KLSG) coordinates ATP. Residue glycine 54 coordinates UMP. Positions 55 and 59 each coordinate ATP. UMP-binding positions include aspartate 74 and 135–142 (TGNPFFTT). Positions 162, 168, and 171 each coordinate ATP.

Belongs to the UMP kinase family. Homohexamer.

Its subcellular location is the cytoplasm. It catalyses the reaction UMP + ATP = UDP + ADP. The protein operates within pyrimidine metabolism; CTP biosynthesis via de novo pathway; UDP from UMP (UMPK route): step 1/1. Its activity is regulated as follows. Inhibited by UTP. Functionally, catalyzes the reversible phosphorylation of UMP to UDP. In Bordetella parapertussis (strain 12822 / ATCC BAA-587 / NCTC 13253), this protein is Uridylate kinase.